The sequence spans 550 residues: Thioredoxin domain-containing protein 2 (550 aa).

A disordered region spans residues 1–50; that stretch reads MFKKNQKLSKDKGLEVNSVQAGAPEESDVKLNNGGKANERGSNEFLDTAQ. Residues serine 42 and serine 51 each carry the phosphoserine modification. A disordered region spans residues 63-428; sequence MLHMSTEESE…IKSSEDVQPS (366 aa). Polar residues-rich tracts occupy residues 73 to 87, 96 to 105, and 112 to 140; these read PPQQVSSTSMFSENT, PKSSTKNTQL, and KTSSYSKQTNSSNIPKSLAITTYPKQGST. Tandem repeats lie at residues 104–118, 119–133, 134–148, 149–163, 164–178, 179–193, 194–208, 209–223, 224–238, 239–252, 253–267, 268–282, 283–297, 298–312, 313–327, 328–342, 343–357, 358–384, 385–399, 400–412, 413–425, and 426–440. The interval 104–440 is 22 X 15 AA approximate tandem repeat of Q-P-K-X-G-D-I-P-K-S-[PS]-E-[KE]-X-I; sequence QLKQEDISKT…EIFPFEAEIE (337 aa). Composition is skewed to basic and acidic residues over residues 148–205, 217–259, 277–304, and 313–348; these read THDR…KSLE, KSSE…ESET, QVKDSMKSKESKIRKPLKDSIQSKENKI, and QPKEGKIHKPLKDSLPSKEGDISKPSEDTIQAKEEI. Serine 158 carries the post-translational modification Phosphoserine. Residues serine 351 and serine 379 each carry the phosphoserine modification. Positions 401–550 constitute a Thioredoxin domain; sequence KEEITVSPED…KLEKSIAELK (150 aa). At serine 407 the chain carries Phosphoserine. The cysteines at positions 477 and 480 are disulfide-linked.

Testis-specific. Strongly expressed in the testicular seminiferous tubules, mostly in the round spermatids.

It is found in the cytoplasm. Functionally, probably plays a regulatory role in sperm development. May participate in regulation of fibrous sheath (FS) assembly by supporting the formation of disulfide bonds during sperm tail morphogenesis. May also be required to rectify incorrect disulfide pairing and generate suitable pairs between the FS constituents. Can reduce disulfide bonds in vitro in the presence of NADP and thioredoxin reductase. The sequence is that of Thioredoxin domain-containing protein 2 (Txndc2) from Rattus norvegicus (Rat).